Consider the following 271-residue polypeptide: Elongation factor Ts (271 aa).

The involved in Mg(2+) ion dislocation from EF-Tu stretch occupies residues 76 to 79; the sequence is TDFV.

It belongs to the EF-Ts family.

Its subcellular location is the cytoplasm. Associates with the EF-Tu.GDP complex and induces the exchange of GDP to GTP. It remains bound to the aminoacyl-tRNA.EF-Tu.GTP complex up to the GTP hydrolysis stage on the ribosome. This Mycolicibacterium vanbaalenii (strain DSM 7251 / JCM 13017 / BCRC 16820 / KCTC 9966 / NRRL B-24157 / PYR-1) (Mycobacterium vanbaalenii) protein is Elongation factor Ts.